We begin with the raw amino-acid sequence, 962 residues long: Glycine dehydrogenase (decarboxylating) (962 aa).

Residue Lys709 is modified to N6-(pyridoxal phosphate)lysine.

This sequence belongs to the GcvP family. As to quaternary structure, the glycine cleavage system is composed of four proteins: P, T, L and H. Requires pyridoxal 5'-phosphate as cofactor.

The enzyme catalyses N(6)-[(R)-lipoyl]-L-lysyl-[glycine-cleavage complex H protein] + glycine + H(+) = N(6)-[(R)-S(8)-aminomethyldihydrolipoyl]-L-lysyl-[glycine-cleavage complex H protein] + CO2. In terms of biological role, the glycine cleavage system catalyzes the degradation of glycine. The P protein binds the alpha-amino group of glycine through its pyridoxal phosphate cofactor; CO(2) is released and the remaining methylamine moiety is then transferred to the lipoamide cofactor of the H protein. The chain is Glycine dehydrogenase (decarboxylating) from Shewanella sp. (strain MR-7).